The following is a 105-amino-acid chain: ATP-dependent Clp protease adapter protein ClpS (105 aa).

It belongs to the ClpS family. As to quaternary structure, binds to the N-terminal domain of the chaperone ClpA.

Functionally, involved in the modulation of the specificity of the ClpAP-mediated ATP-dependent protein degradation. The chain is ATP-dependent Clp protease adapter protein ClpS from Aeromonas salmonicida (strain A449).